A 484-amino-acid polypeptide reads, in one-letter code: Glutamate--tRNA ligase (484 aa).

A 'HIGH' region motif is present at residues 10–20 (PSPTGYLHVGG). The short motif at 252–256 (KLSKR) is the 'KMSKS' region element. An ATP-binding site is contributed by Lys-255.

The protein belongs to the class-I aminoacyl-tRNA synthetase family. Glutamate--tRNA ligase type 1 subfamily. Monomer.

Its subcellular location is the cytoplasm. It catalyses the reaction tRNA(Glu) + L-glutamate + ATP = L-glutamyl-tRNA(Glu) + AMP + diphosphate. Functionally, catalyzes the attachment of glutamate to tRNA(Glu) in a two-step reaction: glutamate is first activated by ATP to form Glu-AMP and then transferred to the acceptor end of tRNA(Glu). This Mycoplasma genitalium (strain ATCC 33530 / DSM 19775 / NCTC 10195 / G37) (Mycoplasmoides genitalium) protein is Glutamate--tRNA ligase.